The following is a 719-amino-acid chain: Solute carrier organic anion transporter family member 6A1 (719 aa).

Residues 1-46 (MFVGVARHSGSQDEVSRGVEPLEAARAQPAKDRRAKGTPKSSKPGK) are disordered. Topologically, residues 1 to 106 (MFVGVARHSG…TCCECCNNIR (106 aa)) are cytoplasmic. Positions 33–46 (RRAKGTPKSSKPGK) are enriched in basic residues. A helical transmembrane segment spans residues 107-126 (CFMIFYCILLICQGVVFGLI). Residues 127–145 (DVSIGDFQKEYQLKTIEKL) lie on the Extracellular side of the membrane. The helical transmembrane segment at 146–166 (ALEKSYDISSGLVAIFIAFYG) threads the bilayer. The Cytoplasmic segment spans residues 167 to 171 (DRKKV). Residues 172–196 (IWFVASSFLIGLGSLLCAFPSINEE) traverse the membrane as a helical segment. Topologically, residues 197–223 (NKQSKVGIEDICEEIKVVSGCQSSGIS) are extracellular. A helical transmembrane segment spans residues 224 to 254 (FQSKYLSFFILGQTVQGIAGMPLYILGITFI). Residues 255–274 (DENVATHSAGIYLGIAECTS) lie on the Cytoplasmic side of the membrane. Residues 275–295 (MIGYALGYVLGAPLVKVPENT) traverse the membrane as a helical segment. The Extracellular portion of the chain corresponds to 296 to 311 (TSATNTTVNNGSPEWL). N-linked (GlcNAc...) asparagine glycosylation is present at Asn300. A helical transmembrane segment spans residues 312–336 (WTWWINFLFAAVVAWCTLIPLSCFP). Residues 337-378 (NNMPGSTRIKARKRKQLHFFDSRLKDLKLGTNIKDLCAALWI) are Cytoplasmic-facing. Residues 379-400 (LMKNPVLICLALSKATEYLVII) form a helical membrane-spanning segment. Over 401–420 (GASEFLPIYLENQFILTPTV) the chain is Extracellular. The chain crosses the membrane as a helical span at residues 421 to 444 (ATTLAGLVLIPGGALGQLLGGVIV). The Cytoplasmic segment spans residues 445–448 (STLE). Residues 449–472 (MSCKALMRFIMVTSVISLILLVFI) form a helical membrane-spanning segment. Over 473–581 (IFVRCNPVQF…DAKCYKLPLF (109 aa)) the chain is Extracellular. Residues 496 to 551 (GNLTAPCNEKCRCSSSIYSSICGRDDIEYFSPCFAGCTYSKAQNQKKMYYNCSCIK) enclose the Kazal-like domain. Asn497 is a glycosylation site (N-linked (GlcNAc...) asparagine). 3 disulfides stabilise this stretch: Cys502/Cys532, Cys508/Cys528, and Cys517/Cys549. N-linked (GlcNAc...) asparagine glycosylation is present at Asn546. A helical membrane pass occupies residues 582–604 (IAFIFSTLIFSGFSGVPIVLAMT). Residues 605 to 613 (RVVPDKLRS) are Cytoplasmic-facing. The chain crosses the membrane as a helical span at residues 614–639 (LALGVSYVILRIFGTIPGPSIFKMSG). Over 640-673 (ETSCILRDVNKCGHTGRCWIYNKTKMAFLLVGIC) the chain is Extracellular. A glycan (N-linked (GlcNAc...) asparagine) is linked at Asn661. The chain crosses the membrane as a helical span at residues 674–691 (FLCKLCTIIFTTIAFFIY). The Cytoplasmic portion of the chain corresponds to 692 to 719 (KRRLNENTDFPDVTVKNPKVKKKEETDL).

This sequence belongs to the organo anion transporter (TC 2.A.60) family. As to expression, strongly expressed in testis. Weakly expressed in spleen, brain, fetal brain and placenta. Detected in lung tumors.

It is found in the cell membrane. The sequence is that of Solute carrier organic anion transporter family member 6A1 (SLCO6A1) from Homo sapiens (Human).